A 303-amino-acid chain; its full sequence is MQPSQLRSLTTESRNPNTMGISQADPLEILQMINEEDMKVAQAVNLVLPHVKTASDFAYDSISNGGRLIYLGAGTSGRLGVMDAVECPPTYSVSPDVIVGIMAGGDSAFSHAAEDVEDSEEAGKQDLVHIHLTSKDTVVGIAASGRTPYIIGALNYAKSIGAKTVALSCNEQSKISELADCAIEVIVGPEAITGSTRMKAASAHKMILNMLSTSVMIRQGKVYENLMVDVKVSNHKLKERAITIIQHVTNASYEQALKTLEAADLEVKTAIVMLQTNTDKKTAKDLLNKANGHIDKAISHHQS.

Residues 1–21 (MQPSQLRSLTTESRNPNTMGI) form a disordered region. Positions 58–221 (AYDSISNGGR…STSVMIRQGK (164 aa)) constitute an SIS domain. Residue E86 is the Proton donor of the active site. Residue E117 is part of the active site.

This sequence belongs to the GCKR-like family. MurNAc-6-P etherase subfamily. As to quaternary structure, homodimer.

It carries out the reaction N-acetyl-D-muramate 6-phosphate + H2O = N-acetyl-D-glucosamine 6-phosphate + (R)-lactate. It functions in the pathway amino-sugar metabolism; N-acetylmuramate degradation. Its function is as follows. Specifically catalyzes the cleavage of the D-lactyl ether substituent of MurNAc 6-phosphate, producing GlcNAc 6-phosphate and D-lactate. This chain is N-acetylmuramic acid 6-phosphate etherase, found in Bacillus pumilus (strain SAFR-032).